A 111-amino-acid chain; its full sequence is Aquaporin-2 (111 aa).

Topologically, residues 1 to 6 are cytoplasmic; that stretch reads SIAFSR. A helical transmembrane segment spans residues 7-27; that stretch reads AVFSEFLATLLFVFFGLGSAL. Over 28 to 37 the chain is Extracellular; it reads NWPSTVPIPT. Residues 38 to 56 form a helical membrane-spanning segment; it reads VLQISMAFGLAIGTLVQTL. Over 57–61 the chain is Cytoplasmic; it reads GHISG. The segment at residues 62 to 71 is an intramembrane region (discontinuously helical); it reads AHINPAVTVA. The NPA 1 motif lies at 65 to 67; sequence NPA. Topologically, residues 72 to 82 are cytoplasmic; sequence CLVGCHVSFLR. Residues 83–104 traverse the membrane as a helical segment; sequence ATFYVAAQLLGAVAGAALLHKL. The Extracellular segment spans residues 105-111; the sequence is TPEDIRG.

This sequence belongs to the MIP/aquaporin (TC 1.A.8) family. In terms of assembly, homotetramer. Serine phosphorylation is necessary and sufficient for expression at the apical membrane. Endocytosis is not phosphorylation-dependent. In terms of processing, N-glycosylated.

It localises to the apical cell membrane. It is found in the basolateral cell membrane. Its subcellular location is the cell membrane. The protein resides in the cytoplasmic vesicle membrane. The protein localises to the golgi apparatus. It localises to the trans-Golgi network membrane. It catalyses the reaction H2O(in) = H2O(out). The enzyme catalyses glycerol(in) = glycerol(out). Functionally, forms a water-specific channel that provides the plasma membranes of renal collecting duct with high permeability to water, thereby permitting water to move in the direction of an osmotic gradient. Plays an essential role in renal water homeostasis. Could also be permeable to glycerol. In Macroscelides proboscideus (Short-eared elephant shrew), this protein is Aquaporin-2.